Consider the following 267-residue polypeptide: Glutamate racemase (267 aa).

Residues 9 to 10 (DS) and 41 to 42 (YS) each bind substrate. Cysteine 73 serves as the catalytic Proton donor/acceptor. 74–75 (NT) provides a ligand contact to substrate. Cysteine 184 acts as the Proton donor/acceptor in catalysis. Residue 185–186 (TH) coordinates substrate.

This sequence belongs to the aspartate/glutamate racemases family.

The enzyme catalyses L-glutamate = D-glutamate. Its pathway is cell wall biogenesis; peptidoglycan biosynthesis. Its function is as follows. Provides the (R)-glutamate required for cell wall biosynthesis. This chain is Glutamate racemase, found in Glaesserella parasuis serovar 5 (strain SH0165) (Haemophilus parasuis).